Here is a 174-residue protein sequence, read N- to C-terminus: Protein RESTRICTED TEV MOVEMENT 1 (174 aa).

Positions 1–152 (MKIGPVGKHD…LQYIGVYLRP (152 aa)) constitute a Jacalin-type lectin domain.

This sequence belongs to the jacalin lectin family. Self-interacts. Interacts with RTM3. As to expression, expressed at low levels exclusively in phloem-associated cells (e.g. sieve elements and adjacent cells).

Its subcellular location is the cytoplasm. Functionally, required for the restriction of long-distance movement of the pathogenic tobacco etch virus (TEV) without causing a hypersensitive response or inducing systemic acquired resistance. This Arabidopsis thaliana (Mouse-ear cress) protein is Protein RESTRICTED TEV MOVEMENT 1 (RTM1).